The following is a 478-amino-acid chain: Nuclear distribution protein PAC1 (478 aa).

The region spanning 9–41 is the LisH domain; the sequence is QAEELHKAMIAYLLSANLPKSAAALREELADSV. A coiled-coil region spans residues 60 to 87; it reads TSVVRLQKKIMDLESRNNALQSELDSAT. WD repeat units lie at residues 113–154, 156–196, 200–247, 250–289, 292–352, 354–393, 398–439, and 440–477; these read SHRE…RTIK, HTKA…KNIR, GHDH…CVKT, GHVD…TKST, GHEH…IKTL, GHDN…KCVR, AHGH…GASA, and INGV…RVFA.

This sequence belongs to the WD repeat LIS1/nudF family. Self-associates. Interacts with NDL1 and dynein.

Its subcellular location is the cytoplasm. It localises to the cytoskeleton. It is found in the spindle pole. Positively regulates the activity of the minus-end directed microtubule motor protein dynein. May enhance dynein-mediated microtubule sliding by targeting dynein to the microtubule plus end. Required for nuclear migration during vegetative growth as well as development. Required for retrograde early endosome (EE) transport from the hyphal tip. Required for localization of dynein to the mitotic spindle poles. Recruits additional proteins to the dynein complex at SPBs. The chain is Nuclear distribution protein PAC1 from Paracoccidioides brasiliensis (strain Pb03).